The chain runs to 712 residues: Ribosomal RNA large subunit methyltransferase K/L (712 aa).

One can recognise a THUMP domain in the interval Gln42–Leu153.

It belongs to the methyltransferase superfamily. RlmKL family.

The protein localises to the cytoplasm. It carries out the reaction guanosine(2445) in 23S rRNA + S-adenosyl-L-methionine = N(2)-methylguanosine(2445) in 23S rRNA + S-adenosyl-L-homocysteine + H(+). The catalysed reaction is guanosine(2069) in 23S rRNA + S-adenosyl-L-methionine = N(2)-methylguanosine(2069) in 23S rRNA + S-adenosyl-L-homocysteine + H(+). Specifically methylates the guanine in position 2445 (m2G2445) and the guanine in position 2069 (m7G2069) of 23S rRNA. In Stenotrophomonas maltophilia (strain R551-3), this protein is Ribosomal RNA large subunit methyltransferase K/L.